We begin with the raw amino-acid sequence, 430 residues long: Signal recognition particle protein (430 aa).

Residues 105 to 112 (GLQGSGKT), 187 to 191 (DTAGR), and 245 to 248 (TKLD) contribute to the GTP site.

This sequence belongs to the GTP-binding SRP family. SRP54 subfamily. Part of the signal recognition particle protein translocation system, which is composed of SRP and FtsY.

Its subcellular location is the cytoplasm. It catalyses the reaction GTP + H2O = GDP + phosphate + H(+). Functionally, involved in targeting and insertion of nascent membrane proteins into the cytoplasmic membrane. Binds to the hydrophobic signal sequence of the ribosome-nascent chain (RNC) as it emerges from the ribosomes. The SRP-RNC complex is then targeted to the cytoplasmic membrane where it interacts with the SRP receptor FtsY. The protein is Signal recognition particle protein of Thermus aquaticus.